The sequence spans 261 residues: Leucyl/phenylalanyl-tRNA--protein transferase (261 aa).

Belongs to the L/F-transferase family.

Its subcellular location is the cytoplasm. It carries out the reaction N-terminal L-lysyl-[protein] + L-leucyl-tRNA(Leu) = N-terminal L-leucyl-L-lysyl-[protein] + tRNA(Leu) + H(+). The enzyme catalyses N-terminal L-arginyl-[protein] + L-leucyl-tRNA(Leu) = N-terminal L-leucyl-L-arginyl-[protein] + tRNA(Leu) + H(+). It catalyses the reaction L-phenylalanyl-tRNA(Phe) + an N-terminal L-alpha-aminoacyl-[protein] = an N-terminal L-phenylalanyl-L-alpha-aminoacyl-[protein] + tRNA(Phe). Functions in the N-end rule pathway of protein degradation where it conjugates Leu, Phe and, less efficiently, Met from aminoacyl-tRNAs to the N-termini of proteins containing an N-terminal arginine or lysine. The sequence is that of Leucyl/phenylalanyl-tRNA--protein transferase from Yersinia pestis bv. Antiqua (strain Antiqua).